Consider the following 639-residue polypeptide: Chaperone protein DnaK (639 aa).

T195 is modified (phosphothreonine; by autocatalysis). Over residues 601–618 (NAAAGAAPAGEPAPGEPQ) the composition is skewed to low complexity. A disordered region spans residues 601–639 (NAAAGAAPAGEPAPGEPQAEQKKDDGVIDAEYVDVDEKK). Residues 627–639 (VIDAEYVDVDEKK) show a composition bias toward acidic residues.

It belongs to the heat shock protein 70 family.

Its function is as follows. Acts as a chaperone. This Acidobacterium capsulatum (strain ATCC 51196 / DSM 11244 / BCRC 80197 / JCM 7670 / NBRC 15755 / NCIMB 13165 / 161) protein is Chaperone protein DnaK.